Here is a 323-residue protein sequence, read N- to C-terminus: Aldo-keto reductase family 1 member C4 (323 aa).

Residues 20–24 and Asp-50 each bind NADP(+); that span reads GFGTY. Catalysis depends on Tyr-55, which acts as the Proton donor. His-117 is a binding site for substrate. NADP(+) is bound by residues 166-167, Gln-190, 216-221, and 270-280; these read SN, HSALGT, and KSYNEQRIREN.

It belongs to the aldo/keto reductase family. Monomer. Post-translationally, the N-terminus is blocked. Liver specific.

It localises to the cytoplasm. It is found in the cytosol. It carries out the reaction a 3alpha-hydroxysteroid + NADP(+) = a 3-oxosteroid + NADPH + H(+). The enzyme catalyses a 3alpha-hydroxysteroid + NAD(+) = a 3-oxosteroid + NADH + H(+). The catalysed reaction is 5alpha-androstane-3alpha,17beta-diol + NADP(+) = 17beta-hydroxy-5alpha-androstan-3-one + NADPH + H(+). It catalyses the reaction 5alpha-androstane-3beta,17beta-diol + NADP(+) = 17beta-hydroxy-5alpha-androstan-3-one + NADPH + H(+). It carries out the reaction 5alpha-androstane-3alpha,17beta-diol + NAD(+) = 17beta-hydroxy-5alpha-androstan-3-one + NADH + H(+). The enzyme catalyses 17beta-estradiol + NADP(+) = estrone + NADPH + H(+). The catalysed reaction is 17beta-estradiol + NAD(+) = estrone + NADH + H(+). It catalyses the reaction (20S)-hydroxypregn-4-en-3-one + NADP(+) = progesterone + NADPH + H(+). It carries out the reaction (20S)-hydroxypregn-4-en-3-one + NAD(+) = progesterone + NADH + H(+). The enzyme catalyses androsterone + NADP(+) = 5alpha-androstan-3,17-dione + NADPH + H(+). The catalysed reaction is testosterone + NADP(+) = androst-4-ene-3,17-dione + NADPH + H(+). It catalyses the reaction testosterone + NAD(+) = androst-4-ene-3,17-dione + NADH + H(+). It carries out the reaction 3alpha-hydroxy-5alpha-androstane 17-O-(beta-D-glucuronate) + NADP(+) = 5alpha-dihydrotestosterone 17-O-(beta-D-glucuronate) + NADPH + H(+). The enzyme catalyses (3beta,5alpha,17beta)-3-hydroxy-androstan-17-yl sulfate + NADP(+) = 5alpha-dihydrotestosterone sulfate + NADPH + H(+). The catalysed reaction is 5alpha-androstane-3alpha,17beta-diol + NAD(+) = androsterone + NADH + H(+). It catalyses the reaction chlordecone alcohol + NADP(+) = chlordecone + NADPH + H(+). It functions in the pathway steroid metabolism. Inhibited by nonsteroidal the anti-inflammatory drugs (NSAID) flufenamic. The oxidation reaction is inhibited by low micromolar concentrations of NADPH. Its function is as follows. Cytosolic aldo-keto reductase that catalyzes the NADH and NADPH-dependent reduction of ketosteroids to hydroxysteroids. Liver specific enzyme that acts as an NAD(P)(H)-dependent 3-, 17- and 20-ketosteroid reductase on the steroid nucleus and side chain. Displays the ability to catalyze both oxidation and reduction in vitro, but most probably acts as a reductase in vivo since the oxidase activity measured in vitro is inhibited by physiological concentration of NADPH. Acts preferentially as a 3-alpha-hydroxysteroid dehydrogenase (HSD) with a subsidiary 3-beta-HSD activity. Catalyzes efficiently the transformation of the potent androgen 5-alpha-dihydrotestosterone (5alpha-DHT or 17beta-hydroxy-5alpha-androstan-3-one) into the less active form, 5-alpha-androstan-3-alpha,17-beta-diol (3-alpha-diol). Catalyzes the reduction of estrone into 17beta-estradiol but with low efficiency. Metabolizes a broad spectrum of natural and synthetic therapeutic steroid and plays an important role in metabolism of androgens, estrogens, progestereone and conjugated steroids. Catalyzes the biotransformation of the pesticide chlordecone (kepone) to its corresponding alcohol leading to increased biliary excretion of the pesticide and concomitant reduction of its neurotoxicity since bile is the major excretory route. This chain is Aldo-keto reductase family 1 member C4 (AKR1C4), found in Homo sapiens (Human).